A 406-amino-acid polypeptide reads, in one-letter code: COP9 signalosome complex subunit 4 (406 aa).

A PCI domain is found at 197–366 (YRRKFIEAAQ…GIVHFETREP (170 aa)).

The protein belongs to the CSN4 family. In terms of assembly, component of the CSN complex, probably composed of cops1, cops2, cops3, cops4, cops5, cops6, cops7, cops8 and cops9.

Its subcellular location is the cytoplasm. The protein resides in the nucleus. It localises to the cytoplasmic vesicle. It is found in the secretory vesicle. The protein localises to the synaptic vesicle. Functionally, component of the COP9 signalosome complex (CSN), a complex involved in various cellular and developmental processes. The CSN complex is an essential regulator of the ubiquitin (Ubl) conjugation pathway by mediating the deneddylation of the cullin subunits of E3 ligase complexes, leading to modify the Ubl ligase activity. The protein is COP9 signalosome complex subunit 4 (cops4) of Danio rerio (Zebrafish).